Reading from the N-terminus, the 77-residue chain is Early E3 9.0 kDa glycoprotein (77 aa).

Asn-7 is a glycosylation site (N-linked (GlcNAc...) asparagine; by host). Residues 27–47 (ITILIVIGILILSVILYFIFC) form a helical membrane-spanning segment.

This sequence belongs to the adenoviridae E3A-1 family.

The protein localises to the host nucleus membrane. The chain is Early E3 9.0 kDa glycoprotein from Human adenovirus B serotype 3 (HAdV-3).